A 233-amino-acid chain; its full sequence is Large ribosomal subunit protein bL25 (233 aa).

The segment at 1 to 23 (MATVRELKATARPKSGKGAARAE) is disordered.

The protein belongs to the bacterial ribosomal protein bL25 family. CTC subfamily. Part of the 50S ribosomal subunit; part of the 5S rRNA/L5/L18/L25 subcomplex. Contacts the 5S rRNA. Binds to the 5S rRNA independently of L5 and L18.

Its function is as follows. This is one of the proteins that binds to the 5S RNA in the ribosome where it forms part of the central protuberance. This Nitrobacter hamburgensis (strain DSM 10229 / NCIMB 13809 / X14) protein is Large ribosomal subunit protein bL25.